We begin with the raw amino-acid sequence, 309 residues long: Porphobilinogen deaminase (309 aa).

An S-(dipyrrolylmethanemethyl)cysteine modification is found at Cys-241.

It belongs to the HMBS family. As to quaternary structure, monomer. Requires dipyrromethane as cofactor.

It carries out the reaction 4 porphobilinogen + H2O = hydroxymethylbilane + 4 NH4(+). Its pathway is porphyrin-containing compound metabolism; protoporphyrin-IX biosynthesis; coproporphyrinogen-III from 5-aminolevulinate: step 2/4. Tetrapolymerization of the monopyrrole PBG into the hydroxymethylbilane pre-uroporphyrinogen in several discrete steps. This chain is Porphobilinogen deaminase, found in Bacillus thuringiensis subsp. konkukian (strain 97-27).